A 119-amino-acid polypeptide reads, in one-letter code: Ribosome-binding factor A (119 aa).

The protein belongs to the RbfA family. In terms of assembly, monomer. Binds 30S ribosomal subunits, but not 50S ribosomal subunits or 70S ribosomes.

The protein localises to the cytoplasm. In terms of biological role, one of several proteins that assist in the late maturation steps of the functional core of the 30S ribosomal subunit. Associates with free 30S ribosomal subunits (but not with 30S subunits that are part of 70S ribosomes or polysomes). Required for efficient processing of 16S rRNA. May interact with the 5'-terminal helix region of 16S rRNA. This is Ribosome-binding factor A from Pseudothermotoga lettingae (strain ATCC BAA-301 / DSM 14385 / NBRC 107922 / TMO) (Thermotoga lettingae).